The sequence spans 585 residues: MVLIHTSVGFFKRFSTSATPSTSSASDWKTQQTLFRVATEISSILLQRRNWITHLQYVKSKLPRSTLTSPVFLQILRETRKCPKTTLDFFDFAKTHLRFEPDLKSHCRVIEVAAESGLLERAEMLLRPLVETNSVSLVVGEMHRWFEGEVSLSVSLSLVLEYYALKGSHHNGLEVFGFMRRLRLSPSQSAYNSLLGSLVKENQFRVALCLYSAMVRNGIVSDELTWDLIAQILCEQGRSKSVFKLMETGVESCKIYTNLVECYSRNGEFDAVFSLIHEMDDKKLELSFCSYGCVLDDACRLGDAEFIDKVLCLMVEKKFVTLGDSAVNDKIIERLCDMGKTFASEMLFRKACNGETVRLWDSTYGCMLKALSRKKRTKEAVDVYRMICRKGITVLDESCYIEFANALCRDDNSSEEEEELLVDVIKRGFVPCTHKLSEVLASMCRKRRWKSAEKLLDSVMEMEVYFDSFACGLLMERYCRSGKLEKALVLHEKIKKMKGSLDVNAYNAVLDRLMMRQKEMVEEAVVVFEYMKEINSVNSKSFTIMIQGLCRVKEMKKAMRSHDEMLRLGLKPDLVTYKRLILGFK.

PPR repeat units lie at residues 152–186, 187–221, 222–247, 252–286, 287–321, 324–358, 360–394, 396–431, 432–466, 467–501, 502–534, and 538–572; these read LSVS…RLSP, SQSA…GIVS, DELT…KLME, SCKI…KLEL, SFCS…KFVT, DSAV…ETVR, WDST…GITV, DESC…GFVP, CTHK…EVYF, DSFA…KGSL, DVNA…MKEI, and NSKS…GLKP.

Belongs to the PPR family. P subfamily.

This chain is Pentatricopeptide repeat-containing protein At4g21170, found in Arabidopsis thaliana (Mouse-ear cress).